A 669-amino-acid polypeptide reads, in one-letter code: Histone-lysine N-methyltransferase, H3 lysine-9 specific SUVH3 (669 aa).

Disordered stretches follow at residues 56–127 (YSSF…EKKT) and 270–290 (ESLI…ASDQ). 2 stretches are compositionally biased toward polar residues: residues 65 to 82 (QQPT…NTPI) and 93 to 107 (RTPT…SSGT). A DNA-binding region (a.T hook) is located at residues 108-120 (KRGVGRPKGTTSV). The region spanning 208-355 (GTVPGIEVGD…CNTFKYKLVR (148 aa)) is the YDG domain. Residues 430–491 (IGCSCSGSCS…SCKNRVIQTG (62 aa)) enclose the Pre-SET domain. Zn(2+)-binding residues include C432, C434, C438, C445, C447, C473, C477, C479, and C483. One can recognise an SET domain in the interval 494 to 638 (SRLEVFKTRN…PMAELTYDYG (145 aa)). S-adenosyl-L-methionine is bound by residues 504-506 (RGW), D540, Y542, R592, and 595-596 (NH). Residues C598, C657, C659, and C664 each contribute to the Zn(2+) site. The Post-SET domain maps to 653–669 (GQRTCLCGSEQCRGSFG).

It belongs to the class V-like SAM-binding methyltransferase superfamily. Histone-lysine methyltransferase family. Suvar3-9 subfamily. As to expression, expressed in leaves stems and flowers.

The protein resides in the nucleus. Its subcellular location is the chromosome. The protein localises to the centromere. It catalyses the reaction L-lysyl(9)-[histone H3] + S-adenosyl-L-methionine = N(6)-methyl-L-lysyl(9)-[histone H3] + S-adenosyl-L-homocysteine + H(+). In terms of biological role, histone methyltransferase. Methylates 'Lys-9' of histone H3. H3 'Lys-9' methylation represents a specific tag for epigenetic transcriptional repression. This chain is Histone-lysine N-methyltransferase, H3 lysine-9 specific SUVH3 (SUVH3), found in Arabidopsis thaliana (Mouse-ear cress).